A 492-amino-acid chain; its full sequence is Glutamyl-tRNA(Gln) amidotransferase subunit A (492 aa).

Catalysis depends on charge relay system residues Lys-78 and Ser-158. Catalysis depends on Ser-182, which acts as the Acyl-ester intermediate.

It belongs to the amidase family. GatA subfamily. In terms of assembly, heterotrimer of A, B and C subunits.

It catalyses the reaction L-glutamyl-tRNA(Gln) + L-glutamine + ATP + H2O = L-glutaminyl-tRNA(Gln) + L-glutamate + ADP + phosphate + H(+). Allows the formation of correctly charged Gln-tRNA(Gln) through the transamidation of misacylated Glu-tRNA(Gln) in organisms which lack glutaminyl-tRNA synthetase. The reaction takes place in the presence of glutamine and ATP through an activated gamma-phospho-Glu-tRNA(Gln). This is Glutamyl-tRNA(Gln) amidotransferase subunit A from Rhodopseudomonas palustris (strain ATCC BAA-98 / CGA009).